The following is a 134-amino-acid chain: Tail assembly protein Gp24 (134 aa).

It belongs to the L5likevirus tail assembly protein family. In terms of assembly, interacts with tail assembly protein Gp25 and tape measure protein.

Promotes tail assembly by creating a scaffold for the tail tube proteins. The tail assembly proteins Gp24 and Gp25 would wrap the linear tape measure protein to create a tail assembly scaffold. It would allow polymerization of tail tube protein during which Gp24 and Gp25 are released and therefore are absent from the mature virion. The tail assembly protein Gp25 is produced by a rare -1 ribosomal frameshift. The ratio Gp24/Gp25 is important for proper tail assembly. The protein is Tail assembly protein Gp24 (24) of Mycobacterium (Mycobacteriophage D29).